The primary structure comprises 138 residues: Thyrotropin subunit beta (138 aa).

The N-terminal stretch at 1–20 (MTAIFLMSMLFGLACGQAMS) is a signal peptide. Cystine bridges form between C22–C72, C36–C87, C39–C125, C47–C103, C51–C105, and C108–C115. A glycan (N-linked (GlcNAc...) asparagine) is linked at N43. The propeptide occupies 133–138 (VLEFSI).

Belongs to the glycoprotein hormones subunit beta family. Heterodimer of a common alpha chain and a unique beta chain which confers biological specificity to thyrotropin, lutropin, follitropin and gonadotropin.

The protein resides in the secreted. In terms of biological role, indispensable for the control of thyroid structure and metabolism. This Sus scrofa (Pig) protein is Thyrotropin subunit beta (TSHB).